Reading from the N-terminus, the 187-residue chain is Large ribosomal subunit protein uL22 (187 aa).

It belongs to the universal ribosomal protein uL22 family.

This Theileria parva (East coast fever infection agent) protein is Large ribosomal subunit protein uL22 (RPL17).